Here is a 434-residue protein sequence, read N- to C-terminus: Ribitol-5-phosphate xylosyltransferase 1 (434 aa).

Residues 1 to 7 lie on the Cytoplasmic side of the membrane; sequence MRFFRRK. Residues 8–28 traverse the membrane as a helical; Signal-anchor for type II membrane protein segment; it reads IAIIVILAYAIFSLYAAYNVF. Residues 29-434 lie on the Extracellular side of the membrane; it reads FSKRVISRVH…VLEENFFKIT (406 aa).

Belongs to the TMEM5 family.

It is found in the golgi apparatus membrane. The catalysed reaction is 3-O-[Rib-ol-P-Rib-ol-P-3-beta-D-GalNAc-(1-&gt;3)-beta-D-GlcNAc-(1-&gt;4)-(O-6-P-alpha-D-Man)]-Thr-[protein] + UDP-alpha-D-xylose = 3-O-[beta-D-Xyl-(1-&gt;4)-Rib-ol-P-Rib-ol-P-3-beta-D-GalNAc-(1-&gt;3)-beta-D-GlcNAc-(1-&gt;4)-(O-6-P-alpha-D-Man)]-Thr-[protein] + UDP + H(+). It participates in protein modification; protein glycosylation. Its function is as follows. Acts as a UDP-D-xylose:ribitol-5-phosphate beta1,4-xylosyltransferase, which catalyzes the transfer of UDP-D-xylose to ribitol 5-phosphate (Rbo5P) to form the Xylbeta1-4Rbo5P linkage on O-mannosyl glycan. Participates in the biosynthesis of the phosphorylated O-mannosyl trisaccharide (N-acetylgalactosamine-beta-3-N-acetylglucosamine-beta-4-(phosphate-6-)mannose), a carbohydrate structure present in alpha-dystroglycan (DAG1), which is required for binding laminin G-like domain-containing extracellular proteins with high affinity. This Danio rerio (Zebrafish) protein is Ribitol-5-phosphate xylosyltransferase 1 (rxylt1).